We begin with the raw amino-acid sequence, 88 residues long: Sec-independent protein translocase protein TatA (88 aa).

Residues 1–21 (MGGISITQLLIIASIVVVLFG) form a helical membrane-spanning segment. The segment at 39–88 (FKKSMSEDDNTTSTSSDKSSQDADFTAPPIEPKANLACPDEAKNKDKEHV) is disordered. The span at 49-62 (TTSTSSDKSSQDAD) shows a compositional bias: low complexity. The segment covering 78-88 (DEAKNKDKEHV) has biased composition (basic and acidic residues).

It belongs to the TatA/E family. In terms of assembly, the Tat system comprises two distinct complexes: a TatABC complex, containing multiple copies of TatA, TatB and TatC subunits, and a separate TatA complex, containing only TatA subunits. Substrates initially bind to the TatABC complex, which probably triggers association of the separate TatA complex to form the active translocon.

It is found in the cell inner membrane. Functionally, part of the twin-arginine translocation (Tat) system that transports large folded proteins containing a characteristic twin-arginine motif in their signal peptide across membranes. TatA could form the protein-conducting channel of the Tat system. The chain is Sec-independent protein translocase protein TatA from Sodalis glossinidius (strain morsitans).